A 262-amino-acid polypeptide reads, in one-letter code: 1,2-epoxyphenylacetyl-CoA isomerase (262 aa).

It belongs to the enoyl-CoA hydratase/isomerase family.

The catalysed reaction is 2-(1,2-epoxy-1,2-dihydrophenyl)acetyl-CoA = 2-oxepin-2(3H)-ylideneacetyl-CoA. Its pathway is aromatic compound metabolism; phenylacetate degradation. Its function is as follows. Catalyzes the reversible conversion of the epoxide to 2-oxepin-2(3H)-ylideneacetyl-CoA (oxepin-CoA). The chain is 1,2-epoxyphenylacetyl-CoA isomerase (paaG) from Escherichia coli (strain K12).